The chain runs to 382 residues: Pyrimidine monooxygenase RutA (382 aa).

FMN contacts are provided by residues 68–69, Asn-134, Glu-143, 159–160, and Ser-209; these read IK and RY.

The protein belongs to the NtaA/SnaA/DszA monooxygenase family. RutA subfamily.

It carries out the reaction uracil + FMNH2 + NADH + O2 = (Z)-3-ureidoacrylate + FMN + NAD(+) + H2O + H(+). It catalyses the reaction thymine + FMNH2 + NADH + O2 = (Z)-2-methylureidoacrylate + FMN + NAD(+) + H2O + H(+). Its function is as follows. Catalyzes the pyrimidine ring opening between N-3 and C-4 by an unusual flavin hydroperoxide-catalyzed mechanism, adding oxygen atoms in the process to yield ureidoacrylate peracid, that immediately reacts with FMN forming ureidoacrylate and FMN-N(5)-oxide. The FMN-N(5)-oxide reacts spontaneously with NADH to produce FMN. Requires the flavin reductase RutF to regenerate FMN in vivo. This Escherichia coli (strain B / BL21-DE3) protein is Pyrimidine monooxygenase RutA.